The sequence spans 25 residues: Caerin-1.7 (25 aa).

Position 25 is a leucine amide (L25).

The protein belongs to the frog skin active peptide (FSAP) family. Caerin subfamily. Caerin-1.7.1 does not have any antibacterial activity. As to expression, expressed by the skin dorsal glands.

It localises to the secreted. Functionally, antibacterial peptide, that adopts an alpha helical conformation which can disrupt bacterial membranes. Each caerin displays a different antimicrobial specificity. The chain is Caerin-1.7 from Ranoidea xanthomera (Northern orange-eyed tree frog).